We begin with the raw amino-acid sequence, 44 residues long: Large ribosomal subunit protein bL34 (44 aa).

This sequence belongs to the bacterial ribosomal protein bL34 family.

In Ehrlichia ruminantium (strain Gardel), this protein is Large ribosomal subunit protein bL34.